The following is a 194-amino-acid chain: MTNDDVLDEFRAAGALREGHFVLSSGLHSPVFLQKNLVFMRPERCERLCKALAQKIIATVGQVDVAVSPAVGGIIPGYETARHLNVPSIYVEREGGGFKFRRGFHLEPGQKVVMVEDIVTTGLSSRECIQAIKDAGGDVVAAACIVDRSGGKADVGVPLIALASLEVPAYPADALPPELAAIPIEDPGSRRLKG.

A 5-phospho-alpha-D-ribose 1-diphosphate-binding site is contributed by 116–124; sequence EDIVTTGLS. The orotate site is built by threonine 120 and arginine 148.

Belongs to the purine/pyrimidine phosphoribosyltransferase family. PyrE subfamily. As to quaternary structure, homodimer. It depends on Mg(2+) as a cofactor.

It carries out the reaction orotidine 5'-phosphate + diphosphate = orotate + 5-phospho-alpha-D-ribose 1-diphosphate. It functions in the pathway pyrimidine metabolism; UMP biosynthesis via de novo pathway; UMP from orotate: step 1/2. In terms of biological role, catalyzes the transfer of a ribosyl phosphate group from 5-phosphoribose 1-diphosphate to orotate, leading to the formation of orotidine monophosphate (OMP). The protein is Orotate phosphoribosyltransferase of Caulobacter vibrioides (strain ATCC 19089 / CIP 103742 / CB 15) (Caulobacter crescentus).